Here is an 802-residue protein sequence, read N- to C-terminus: G-type lectin S-receptor-like serine/threonine-protein kinase At1g61550 (802 aa).

Residues 1 to 19 (MTRFACFLFSTLLLSFSYA) form the signal peptide. The region spanning 20-139 (AITPTSPLSI…VSGITLWQSF (120 aa)) is the Bulb-type lectin domain. Over 20-421 (AITPTSPLSI…EMGGNQRKKT (402 aa)) the chain is Extracellular. N-linked (GlcNAc...) asparagine glycosylation is found at Asn48, Asn89, Asn112, Asn231, and Asn262. One can recognise an EGF-like domain in the interval 273–309 (PANTCDFYGVCGPFGLCVMSIPPKCKCFKGFVPQFSE). Intrachain disulfides connect Cys277–Cys289 and Cys283–Cys297. N-linked (GlcNAc...) asparagine glycosylation is found at Asn315, Asn331, and Asn370. The PAN domain occupies 328-410 (CQGNSTGRHV…GELLSIRLAS (83 aa)). 2 disulfides stabilise this stretch: Cys363–Cys384 and Cys367–Cys373. Residues 422–442 (IIASIVSISLFVTLASAAFGF) form a helical membrane-spanning segment. The Cytoplasmic portion of the chain corresponds to 443–802 (WRYRLKHNAI…EVTQSVVLGR (360 aa)). The 286-residue stretch at 489–774 (FSLVNKLGQG…DLPLPKEPTF (286 aa)) folds into the Protein kinase domain. ATP-binding positions include 495 to 503 (LGQGGFGPV) and Lys517. Phosphoserine is present on residues Ser523 and Ser538. The caM-binding stretch occupies residues 578-595 (RKRVEIDWPKRFSIIQGI). The active-site Proton acceptor is the Asp614. Residues Ser618 and Ser631 each carry the phosphoserine modification. Thr648 carries the phosphothreonine modification. Ser691 carries the post-translational modification Phosphoserine.

The protein belongs to the protein kinase superfamily. Ser/Thr protein kinase family.

It is found in the cell membrane. The enzyme catalyses L-seryl-[protein] + ATP = O-phospho-L-seryl-[protein] + ADP + H(+). The catalysed reaction is L-threonyl-[protein] + ATP = O-phospho-L-threonyl-[protein] + ADP + H(+). This is G-type lectin S-receptor-like serine/threonine-protein kinase At1g61550 from Arabidopsis thaliana (Mouse-ear cress).